Here is a 445-residue protein sequence, read N- to C-terminus: Glutamate--tRNA ligase 2 (445 aa).

The short motif at 10–20 (PSPTGMLHVGN) is the 'HIGH' region element. A 'KMSKS' region motif is present at residues 240-244 (KISKR). K243 serves as a coordination point for ATP.

This sequence belongs to the class-I aminoacyl-tRNA synthetase family. Glutamate--tRNA ligase type 1 subfamily. Monomer.

The protein resides in the cytoplasm. The enzyme catalyses tRNA(Glu) + L-glutamate + ATP = L-glutamyl-tRNA(Glu) + AMP + diphosphate. Catalyzes the attachment of glutamate to tRNA(Glu) in a two-step reaction: glutamate is first activated by ATP to form Glu-AMP and then transferred to the acceptor end of tRNA(Glu). In Rickettsia canadensis (strain McKiel), this protein is Glutamate--tRNA ligase 2.